We begin with the raw amino-acid sequence, 397 residues long: Phosphoglycerate kinase (397 aa).

Substrate-binding positions include 25-27 (DLN), Arg41, 64-67 (HLGR), Arg118, and Arg151. Residues Lys202, Glu324, and 350–353 (GGDT) contribute to the ATP site.

Belongs to the phosphoglycerate kinase family. In terms of assembly, monomer.

Its subcellular location is the cytoplasm. The catalysed reaction is (2R)-3-phosphoglycerate + ATP = (2R)-3-phospho-glyceroyl phosphate + ADP. Its pathway is carbohydrate degradation; glycolysis; pyruvate from D-glyceraldehyde 3-phosphate: step 2/5. The protein is Phosphoglycerate kinase of Acidovorax sp. (strain JS42).